A 146-amino-acid chain; its full sequence is MSRSRLFSVTSAISTIGILCLPLFQLVLSDLPCEEDEMCVNYNDQHPNGWYIWILLLLVLVAALLCGAVVLCLQCWLRRPRIDSHRRTMAVFAVGDLDSIYGTEAAVSPTVGIHLQTQTPDLYPVPAPCFGPLGSPPPYEEIVKTT.

The signal sequence occupies residues 1–29 (MSRSRLFSVTSAISTIGILCLPLFQLVLS). A helical transmembrane segment spans residues 52 to 72 (IWILLLLVLVAALLCGAVVLC).

As to quaternary structure, interacts with WWOX. Expressed in some signet-ring cell carcinoma, especially those showing high invasion and metastatic activity (at protein level).

Its subcellular location is the membrane. This is Transmembrane protein 207 (TMEM207) from Homo sapiens (Human).